The primary structure comprises 887 residues: Bifunctional uridylyltransferase/uridylyl-removing enzyme (887 aa).

The tract at residues 1–329 (MKGLNAKPFS…FPDEEAVTTI (329 aa)) is uridylyltransferase. The segment at 330–686 (INERFQKRGD…TRAAETGAGV (357 aa)) is uridylyl-removing. In terms of domain architecture, HD spans 448-570 (VDEHILMVVR…MRDERHLIAL (123 aa)). ACT domains are found at residues 687–772 (EVLV…GRLS) and 796–871 (VLSI…PETP). The interval 864 to 887 (TSPQPETPGKAPGKPSAGDRIIPR) is disordered.

Belongs to the GlnD family. The cofactor is Mg(2+).

The enzyme catalyses [protein-PII]-L-tyrosine + UTP = [protein-PII]-uridylyl-L-tyrosine + diphosphate. It catalyses the reaction [protein-PII]-uridylyl-L-tyrosine + H2O = [protein-PII]-L-tyrosine + UMP + H(+). Uridylyltransferase (UTase) activity is inhibited by glutamine, while glutamine activates uridylyl-removing (UR) activity. Its function is as follows. Modifies, by uridylylation and deuridylylation, the PII regulatory proteins (GlnB and homologs), in response to the nitrogen status of the cell that GlnD senses through the glutamine level. Under low glutamine levels, catalyzes the conversion of the PII proteins and UTP to PII-UMP and PPi, while under higher glutamine levels, GlnD hydrolyzes PII-UMP to PII and UMP (deuridylylation). Thus, controls uridylylation state and activity of the PII proteins, and plays an important role in the regulation of nitrogen assimilation and metabolism. The polypeptide is Bifunctional uridylyltransferase/uridylyl-removing enzyme (Nitrosospira multiformis (strain ATCC 25196 / NCIMB 11849 / C 71)).